We begin with the raw amino-acid sequence, 39 residues long: Photosystem II reaction center protein J (39 aa).

A helical membrane pass occupies residues 7–27 (IPLWLIGTIVGILVIGLIGIY).

It belongs to the PsbJ family. PSII is composed of 1 copy each of membrane proteins PsbA, PsbB, PsbC, PsbD, PsbE, PsbF, PsbH, PsbI, PsbJ, PsbK, PsbL, PsbM, PsbT, PsbX, PsbY, PsbZ, Psb30/Ycf12, at least 3 peripheral proteins of the oxygen-evolving complex and a large number of cofactors. It forms dimeric complexes.

It is found in the plastid. It localises to the chloroplast thylakoid membrane. One of the components of the core complex of photosystem II (PSII). PSII is a light-driven water:plastoquinone oxidoreductase that uses light energy to abstract electrons from H(2)O, generating O(2) and a proton gradient subsequently used for ATP formation. It consists of a core antenna complex that captures photons, and an electron transfer chain that converts photonic excitation into a charge separation. The polypeptide is Photosystem II reaction center protein J (Welwitschia mirabilis (Tree tumbo)).